The primary structure comprises 383 residues: Homoserine O-succinyltransferase (383 aa).

In terms of domain architecture, AB hydrolase-1 spans asparagine 51–leucine 361. Serine 157 (nucleophile) is an active-site residue. Residue arginine 227 coordinates substrate. Active-site residues include aspartate 324 and histidine 357. Aspartate 358 lines the substrate pocket.

It belongs to the AB hydrolase superfamily. MetX family. Homodimer.

It localises to the cytoplasm. It carries out the reaction L-homoserine + succinyl-CoA = O-succinyl-L-homoserine + CoA. It participates in amino-acid biosynthesis; L-methionine biosynthesis via de novo pathway; O-succinyl-L-homoserine from L-homoserine: step 1/1. In terms of biological role, transfers a succinyl group from succinyl-CoA to L-homoserine, forming succinyl-L-homoserine. The chain is Homoserine O-succinyltransferase from Teredinibacter turnerae (strain ATCC 39867 / T7901).